A 230-amino-acid chain; its full sequence is Ethylene-responsive transcription factor ERF012 (230 aa).

Basic and acidic residues predominate over residues 1 to 17 (MVKQERKIQTSSTKKEM). A disordered region spans residues 1 to 51 (MVKQERKIQTSSTKKEMPLSSSPSSSSSSSSSSSSSSCKNKNKKSKIKKYK). A compositionally biased stretch (low complexity) spans 20 to 39 (SSSPSSSSSSSSSSSSSSCK). A compositionally biased stretch (basic residues) spans 40–51 (NKNKKSKIKKYK). Positions 49 to 106 (KYKGVRMRSWGSWVSEIRAPNQKTRIWLGSYSTAEAAARAYDVALLCLKGPQANLNFP) form a DNA-binding region, AP2/ERF.

It belongs to the AP2/ERF transcription factor family. ERF subfamily. In terms of tissue distribution, expressed cotyledons, ovules and seeds of immature siliques.

The protein localises to the nucleus. Transcriptional activator involved in the regulation of plant development and tolerance to abiotic stresses. Involved in salt and osmotic stress response pathways. May be regulated by the stress-related genes RD29A, RD22, DREB1A or P5CS during stress response. Binds to the GCC-box pathogenesis-related promoter element. May be involved in the regulation of gene expression by stress factors and by components of stress signal transduction pathways. In Arabidopsis thaliana (Mouse-ear cress), this protein is Ethylene-responsive transcription factor ERF012 (ERF012).